The primary structure comprises 189 residues: dCTP deaminase (189 aa).

DCTP-binding positions include 112–117 (KSTYAR), 136–138 (TLE), Gln-157, Tyr-171, and Gln-181. The Proton donor/acceptor role is filled by Glu-138.

This sequence belongs to the dCTP deaminase family. In terms of assembly, homotrimer.

The enzyme catalyses dCTP + H2O + H(+) = dUTP + NH4(+). The protein operates within pyrimidine metabolism; dUMP biosynthesis; dUMP from dCTP (dUTP route): step 1/2. Catalyzes the deamination of dCTP to dUTP. This Acinetobacter baylyi (strain ATCC 33305 / BD413 / ADP1) protein is dCTP deaminase.